A 189-amino-acid polypeptide reads, in one-letter code: Interferon alpha-14 (189 aa).

A signal peptide spans 1-23; it reads MALPFALMMALVVLSCKSSCSLG. 2 cysteine pairs are disulfide-bonded: Cys24–Cys122 and Cys52–Cys162. The N-linked (GlcNAc...) asparagine glycan is linked to Asn95.

The protein belongs to the alpha/beta interferon family.

The protein localises to the secreted. In terms of biological role, produced by macrophages, IFN-alpha have antiviral activities. Interferon stimulates the production of two enzymes: a protein kinase and an oligoadenylate synthetase. This Homo sapiens (Human) protein is Interferon alpha-14 (IFNA14).